The chain runs to 467 residues: Putative laccase-16 (467 aa).

Plastocyanin-like domains follow at residues 7–88 (VLGS…PKHG), 98–225 (KEIP…YTDS), and 318–451 (DFPN…KDGK). Cu cation-binding residues include His-22, His-24, His-67, and His-69. Cu cation is bound by residues His-368, His-371, His-373, His-430, Cys-431, His-432, His-436, and Met-441.

The protein belongs to the multicopper oxidase family. Cu cation is required as a cofactor.

It is found in the secreted. The protein localises to the extracellular space. It localises to the apoplast. The enzyme catalyses 4 hydroquinone + O2 = 4 benzosemiquinone + 2 H2O. Its function is as follows. Lignin degradation and detoxification of lignin-derived products. In Oryza sativa subsp. japonica (Rice), this protein is Putative laccase-16 (LAC16).